A 302-amino-acid polypeptide reads, in one-letter code: Homoserine kinase (302 aa).

Residue 92 to 102 participates in ATP binding; it reads PLARGLGSSAT.

The protein belongs to the GHMP kinase family. Homoserine kinase subfamily.

Its subcellular location is the cytoplasm. It catalyses the reaction L-homoserine + ATP = O-phospho-L-homoserine + ADP + H(+). It participates in amino-acid biosynthesis; L-threonine biosynthesis; L-threonine from L-aspartate: step 4/5. Catalyzes the ATP-dependent phosphorylation of L-homoserine to L-homoserine phosphate. The protein is Homoserine kinase of Trichormus variabilis (strain ATCC 29413 / PCC 7937) (Anabaena variabilis).